Here is a 206-residue protein sequence, read N- to C-terminus: Cytochrome c biogenesis ATP-binding export protein CcmA (206 aa).

One can recognise an ABC transporter domain in the interval 4–205 (LEGIDLTCIR…AGAAIQRLQL (202 aa)). An ATP-binding site is contributed by 36–43 (GPNGSGKT).

This sequence belongs to the ABC transporter superfamily. CcmA exporter (TC 3.A.1.107) family. In terms of assembly, the complex is composed of two ATP-binding proteins (CcmA) and two transmembrane proteins (CcmB).

Its subcellular location is the cell inner membrane. It catalyses the reaction heme b(in) + ATP + H2O = heme b(out) + ADP + phosphate + H(+). In terms of biological role, part of the ABC transporter complex CcmAB involved in the biogenesis of c-type cytochromes; once thought to export heme, this seems not to be the case, but its exact role is uncertain. Responsible for energy coupling to the transport system. The protein is Cytochrome c biogenesis ATP-binding export protein CcmA of Nitrosospira multiformis (strain ATCC 25196 / NCIMB 11849 / C 71).